Reading from the N-terminus, the 165-residue chain is MEMVFYPNDLLRVKTKQIENIDDKIRDYAKKMIELMDISGGVGLAAPQVGLDLALFVVRENKMARPLVFINPSIIETSYEFSSYKEGCLSIPGVYYDLMRPKAVVINFHDENGKSFTIENSDFLARIIQHEMDHLNGVLFIDYYEEKLKNKLLKPYMRERGLKAK.

Fe cation contacts are provided by C88 and H130. E131 is a catalytic residue. Residue H134 participates in Fe cation binding.

The protein belongs to the polypeptide deformylase family. The cofactor is Fe(2+).

The enzyme catalyses N-terminal N-formyl-L-methionyl-[peptide] + H2O = N-terminal L-methionyl-[peptide] + formate. Functionally, removes the formyl group from the N-terminal Met of newly synthesized proteins. Requires at least a dipeptide for an efficient rate of reaction. N-terminal L-methionine is a prerequisite for activity but the enzyme has broad specificity at other positions. This is Peptide deformylase from Borreliella burgdorferi (strain ATCC 35210 / DSM 4680 / CIP 102532 / B31) (Borrelia burgdorferi).